A 127-amino-acid chain; its full sequence is MGKPATPRALPENEAKAVARMLRVSPQKLNLVAALIRGKKVDTALADLEFSRKRIARDVKKCLESAIANAENNHDLDVDDLVVSQAFVGKALVLKRFHARARGRGARILKPFANLTIVVREVRAEAA.

Belongs to the universal ribosomal protein uL22 family. In terms of assembly, part of the 50S ribosomal subunit.

Functionally, this protein binds specifically to 23S rRNA; its binding is stimulated by other ribosomal proteins, e.g. L4, L17, and L20. It is important during the early stages of 50S assembly. It makes multiple contacts with different domains of the 23S rRNA in the assembled 50S subunit and ribosome. The globular domain of the protein is located near the polypeptide exit tunnel on the outside of the subunit, while an extended beta-hairpin is found that lines the wall of the exit tunnel in the center of the 70S ribosome. The sequence is that of Large ribosomal subunit protein uL22 from Methylorubrum extorquens (strain CM4 / NCIMB 13688) (Methylobacterium extorquens).